We begin with the raw amino-acid sequence, 495 residues long: Catalase B (495 aa).

The interval 1 to 25 (MSNNKKLTSLFGAPVSDRENSMTAG) is disordered. Residues His55 and Asn128 contribute to the active site. Tyr338 contacts heme.

This sequence belongs to the catalase family. In terms of assembly, homodimer. Requires heme as cofactor.

It catalyses the reaction 2 H2O2 = O2 + 2 H2O. In terms of biological role, decomposes hydrogen peroxide into water and oxygen; serves to protect cells from the toxic effects of hydrogen peroxide. This chain is Catalase B (katB), found in Staphylococcus xylosus.